The sequence spans 78 residues: Sec-independent protein translocase protein TatA (78 aa).

Residues M1–G21 form a helical membrane-spanning segment. Basic and acidic residues predominate over residues L43 to D60. The interval L43–V78 is disordered. Positions H61–D72 are enriched in polar residues.

The protein belongs to the TatA/E family. As to quaternary structure, the Tat system comprises two distinct complexes: a TatABC complex, containing multiple copies of TatA, TatB and TatC subunits, and a separate TatA complex, containing only TatA subunits. Substrates initially bind to the TatABC complex, which probably triggers association of the separate TatA complex to form the active translocon.

The protein resides in the cell inner membrane. Part of the twin-arginine translocation (Tat) system that transports large folded proteins containing a characteristic twin-arginine motif in their signal peptide across membranes. TatA could form the protein-conducting channel of the Tat system. This is Sec-independent protein translocase protein TatA from Rhodopseudomonas palustris (strain ATCC BAA-98 / CGA009).